The following is a 262-amino-acid chain: MALNKNHSEGGGVIVNNTESILMSYDHVELTFNDMKNVPEAFKGTKKGTVYLTPYRVIFLSKGKDAMRSFMMPFYLMKDCEVKQPVFGANFIKGTVKAEAGGGWEGSASYKLTFTAGGAIEFGQQMLQVASQASRGEVPNGAYGYPYMPSGAYVFPPPVANGMYPCPPGYPYPPPPPEFYPGPPMMDGAMGYVQPPPPPYPGPMEPPVVSGPSAPPTPAAEAKAAEAAASAYYNPGNPHNVYMPTSQPPPPPYYPPEDKKTQ.

Residues 1-84 (MALNKNHSEG…YLMKDCEVKQ (84 aa)) enclose the GRAM domain. Position 192 is a phosphotyrosine (tyrosine 192). Residues 196-200 (PPPPY) carry the PPxY motif 1 motif. Positions 197-206 (PPPYPGPMEP) are enriched in pro residues. The tract at residues 197-262 (PPPYPGPMEP…YYPPEDKKTQ (66 aa)) is disordered. The span at 219–231 (AAEAKAAEAAASA) shows a compositional bias: low complexity. A Phosphotyrosine modification is found at tyrosine 232. Pro residues predominate over residues 246 to 255 (SQPPPPPYYP). A PPxY motif 2 motif is present at residues 249–253 (PPPPY).

Binds to the WW domain of YAP1, WWP1 and WWP2. Interacts with NEDD4. Interacts with ESR1 and UBE3A. Post-translationally, phosphorylated in repsonse to EGF as well as estrogen and progesterone hormones. Tyr-192 and Tyr-232 are phosphorylated by YES and SRC inducing nuclear translocation.

It localises to the cytoplasm. Its subcellular location is the nucleus. In terms of biological role, acts as a transcriptional coactivator of estrogen and progesterone receptors (ESR1 and PGR) upon hormone activation. In presence of estrogen, binds to ESR1-responsive promoters. Synergizes with YAP1 to enhance PGR activity. Modulates expression of post-synaptic scaffolding proteins via regulation of ESR1, ESR2 and PGR. The sequence is that of WW domain-binding protein 2 (Wbp2) from Rattus norvegicus (Rat).